Reading from the N-terminus, the 1096-residue chain is Serine-repeat antigen protein 3 (1096 aa).

A signal peptide spans 1–21 (MARLSSIVFIICLLLCNNAIS). The tract at residues 28–205 (PSSGGTLSGG…RSPPPQVNNI (178 aa)) is disordered. Low complexity predominate over residues 77–97 (NSDSTGDSSLGSTGSNGSQPA). N-linked (GlcNAc...) asparagine glycosylation occurs at N92. The segment covering 102-113 (KEPEPTTPKEPE) has biased composition (basic and acidic residues). Polar residues predominate over residues 123-147 (VTPQKTAETASGKQVSPTPSENPPS). Residues 149 to 161 (DTPKPESSSEKKV) show a composition bias toward basic and acidic residues. Residues N204, N607, N637, N662, N671, N712, N892, and N951 are each glycosylated (N-linked (GlcNAc...) asparagine). Disordered stretches follow at residues 916 to 952 (EAKN…QANS) and 964 to 1006 (NQRT…ASAN). Polar residues-rich tracts occupy residues 925–952 (QNYG…QANS) and 964–975 (NQRTADSNPNAQ). A compositionally biased stretch (low complexity) spans 976 to 1006 (STPSPNTTVTDTVNSNTANSNTANSNTASAN). N981 and N1039 each carry an N-linked (GlcNAc...) asparagine glycan.

This sequence belongs to the peptidase C1 family. In terms of processing, proteolytically cleaved in both blood and liver stage parasites. Precursor of 130 kDa is processed into 72 kDa and 55 kDa forms. Proteolytically cleaved by SUB1.

Its subcellular location is the cell membrane. It localises to the parasitophorous vacuole. It is found in the secreted. The protein localises to the host cytoplasm. In terms of biological role, putative cysteine protease. Probably involved in merozoite release from the parasitophorous vacuole during liver stages. The sequence is that of Serine-repeat antigen protein 3 from Plasmodium berghei (strain Anka).